A 122-amino-acid chain; its full sequence is Large ribosomal subunit protein uL14c (122 aa).

The protein belongs to the universal ribosomal protein uL14 family. Part of the 50S ribosomal subunit.

The protein localises to the plastid. The protein resides in the chloroplast. Its function is as follows. Binds to 23S rRNA. This Cucumis sativus (Cucumber) protein is Large ribosomal subunit protein uL14c.